Reading from the N-terminus, the 349-residue chain is Ferredoxin--NADP reductase 3 (349 aa).

FAD-binding residues include Glu34, Lys42, Tyr46, Val86, Ile120, Asp287, and Ser328.

Belongs to the ferredoxin--NADP reductase type 2 family. As to quaternary structure, homodimer. The cofactor is FAD.

The enzyme catalyses 2 reduced [2Fe-2S]-[ferredoxin] + NADP(+) + H(+) = 2 oxidized [2Fe-2S]-[ferredoxin] + NADPH. This chain is Ferredoxin--NADP reductase 3, found in Lysinibacillus sphaericus (strain C3-41).